Reading from the N-terminus, the 1772-residue chain is Putative stereocilin-like protein (1772 aa).

The signal sequence occupies residues M1–A25. 4 N-linked (GlcNAc...) asparagine glycosylation sites follow: N65, N427, N476, and N565.

The protein belongs to the stereocilin family.

Its subcellular location is the secreted. The protein is Putative stereocilin-like protein (STRCP1) of Homo sapiens (Human).